The sequence spans 519 residues: Chaperone SurA (519 aa).

An N-terminal signal peptide occupies residues 1–31; the sequence is MMRSLHSLRRMSGTVLALMLAAGLPLSAAQA. 2 stretches are compositionally biased toward low complexity: residues 31-45 and 197-207; these read AQPA…QKPA and PAAAQATRAPA. 2 disordered regions span residues 31 to 50 and 196 to 221; these read AQPA…PAPS and NPAA…PAQS. One can recognise a PpiC 1 domain in the interval 223–324; it reads PAMLVLAQIL…NGFHILKVVD (102 aa). The disordered stretch occupies residues 328–361; it reads GGQPAQAARPAPAPAPQQPSSFQEGPSVAAPQGP. Residues 364-463 form the PpiC 2 domain; it reads VTQTHARHIL…FGWHLIQVLE (100 aa).

The protein localises to the periplasm. It catalyses the reaction [protein]-peptidylproline (omega=180) = [protein]-peptidylproline (omega=0). In terms of biological role, chaperone involved in the correct folding and assembly of outer membrane proteins. Recognizes specific patterns of aromatic residues and the orientation of their side chains, which are found more frequently in integral outer membrane proteins. May act in both early periplasmic and late outer membrane-associated steps of protein maturation. The chain is Chaperone SurA from Bordetella parapertussis (strain 12822 / ATCC BAA-587 / NCTC 13253).